The following is a 597-amino-acid chain: MAVDNSTSDAHTPGRQLTVVDIAIIAVYFALNVAVGIWSSCRASRNTVRGYFLAGRDMTWWPIGASLFASSEGSGLFIGLAGSGAAGGLAVAGFEWNATYVLLALAWVFVPIYLSSEIVTMPEYMQKRYGGQRIRMYLSVLSLLLSVFTKISIDLYAGALFVHICLGWNFYLSTVIMLAITALYTIAGGLTAVIYTDALQTLVMVAGAVILTIKAFEQIGGYEQLAEAYAQAVPSRTISNTTCHVPRADAMHMFRDPYTADLPWTGMTFGLTIMAAWYWCTDQVIVQRSLSARDLNHAKGGSILASYLKMLPMGLMVMPGMISRVLFPDDVGCVVPAECLRACGAEIGCSNIAYPKLVMELMPTGLRGLMVAVMMAALMSSLTSIFNSSSTLFTMDIWRRLRPRAGERELLLVGRLVIVVLVGVSVAWIPVLQGSNGGQLFIYMQSVTSSLAPPVTAVFVLGIFWRRANEQGAFWGLMAGLAVGATRLVLEFLHPAPPCGHPDTRPPILHGVHYLHFAVALFLLSGAVVVAGSLLTPHPQGVQIQSLTWWTLAQDLPLGVKTGDGRASQRHAFWARVCGVNAILLMCVNIFFYTYFA.

At 1–16 the chain is on the extracellular side; sequence MAVDNSTSDAHTPGRQ. Residue asparagine 5 is glycosylated (N-linked (GlcNAc...) asparagine). Residues 17 to 37 traverse the membrane as a helical segment; sequence LTVVDIAIIAVYFALNVAVGI. Over 38–73 the chain is Cytoplasmic; it reads WSSCRASRNTVRGYFLAGRDMTWWPIGASLFASSEG. A helical membrane pass occupies residues 74-94; it reads SGLFIGLAGSGAAGGLAVAGF. The Extracellular portion of the chain corresponds to 95 to 100; it reads EWNATY. Asparagine 97 carries N-linked (GlcNAc...) asparagine glycosylation. The chain crosses the membrane as a helical span at residues 101–121; it reads VLLALAWVFVPIYLSSEIVTM. Residues 122–139 lie on the Cytoplasmic side of the membrane; that stretch reads PEYMQKRYGGQRIRMYLS. Residues 140–162 traverse the membrane as a helical segment; it reads VLSLLLSVFTKISIDLYAGALFV. Residues 163 to 174 lie on the Extracellular side of the membrane; it reads HICLGWNFYLST. The chain crosses the membrane as a helical span at residues 175 to 195; sequence VIMLAITALYTIAGGLTAVIY. At 196-201 the chain is on the cytoplasmic side; the sequence is TDALQT. The helical transmembrane segment at 202–222 threads the bilayer; that stretch reads LVMVAGAVILTIKAFEQIGGY. The Extracellular portion of the chain corresponds to 223–265; sequence EQLAEAYAQAVPSRTISNTTCHVPRADAMHMFRDPYTADLPWT. Residues 266–286 form a helical membrane-spanning segment; the sequence is GMTFGLTIMAAWYWCTDQVIV. Residues 287-301 are Cytoplasmic-facing; it reads QRSLSARDLNHAKGG. A helical transmembrane segment spans residues 302 to 322; sequence SILASYLKMLPMGLMVMPGMI. At 323–367 the chain is on the extracellular side; the sequence is SRVLFPDDVGCVVPAECLRACGAEIGCSNIAYPKLVMELMPTGLR. A helical membrane pass occupies residues 368–388; that stretch reads GLMVAVMMAALMSSLTSIFNS. The Cytoplasmic portion of the chain corresponds to 389 to 410; the sequence is SSTLFTMDIWRRLRPRAGEREL. The chain crosses the membrane as a helical span at residues 411–431; that stretch reads LLVGRLVIVVLVGVSVAWIPV. At 432–444 the chain is on the extracellular side; sequence LQGSNGGQLFIYM. The helical transmembrane segment at 445 to 465 threads the bilayer; it reads QSVTSSLAPPVTAVFVLGIFW. Topologically, residues 466–472 are cytoplasmic; it reads RRANEQG. A helical transmembrane segment spans residues 473 to 493; the sequence is AFWGLMAGLAVGATRLVLEFL. Over 494–514 the chain is Extracellular; the sequence is HPAPPCGHPDTRPPILHGVHY. Residues 515 to 535 traverse the membrane as a helical segment; the sequence is LHFAVALFLLSGAVVVAGSLL. At 536 to 576 the chain is on the cytoplasmic side; that stretch reads TPHPQGVQIQSLTWWTLAQDLPLGVKTGDGRASQRHAFWAR. Residues 577–597 form a helical membrane-spanning segment; that stretch reads VCGVNAILLMCVNIFFYTYFA.

This sequence belongs to the sodium:solute symporter (SSF) (TC 2.A.21) family. As to expression, predominantyl expressed in kidney. Also detected at very low levels in testes, skeletal muscle, and spleen.

Its subcellular location is the apical cell membrane. The enzyme catalyses D-mannose(out) + Na(+)(out) = D-mannose(in) + Na(+)(in). It catalyses the reaction D-fructopyranose(out) + Na(+)(out) = D-fructopyranose(in) + Na(+)(in). In terms of biological role, electrogenic Na+-coupled sugar symporter that actively transports D-mannose or D-fructose at the plasma membrane, with a Na+ to sugar coupling ratio of 1:1. Transporter activity is driven by a transmembrane Na+ electrochemical gradient set by the Na+/K+ pump. Exclusively recognizes sugar substrates having a pyranose ring with an axial hydroxyl group on carbon 2. Has likely evolved to enable renal reabsorption of D-mannose, an important constituent of oligosaccharide chains of glycoproteins. Contributes to dietary D-fructose reabsorption from glomerular filtrate across the brush border of the kidney. The sequence is that of Sodium/mannose cotransporter SLC5A10 (SLC5A10) from Bos taurus (Bovine).